The primary structure comprises 262 residues: tRNA (guanine-N(1)-)-methyltransferase (262 aa).

S-adenosyl-L-methionine is bound by residues Gly-113 and 137-142 (IGDYVL).

This sequence belongs to the RNA methyltransferase TrmD family. Homodimer.

It is found in the cytoplasm. The catalysed reaction is guanosine(37) in tRNA + S-adenosyl-L-methionine = N(1)-methylguanosine(37) in tRNA + S-adenosyl-L-homocysteine + H(+). Functionally, specifically methylates guanosine-37 in various tRNAs. In Thermobifida fusca (strain YX), this protein is tRNA (guanine-N(1)-)-methyltransferase.